Here is a 677-residue protein sequence, read N- to C-terminus: Mitochondrial 15S rRNA processing factor ppr3 (677 aa).

A mitochondrion-targeting transit peptide spans 1-43 (MFTEICGKLRTCIYKKVAFSRPLGCNLRQLPVFRDFHNSVSCL). PPR repeat units lie at residues 210-244 (SVYL…QLKP), 245-279 (DNYT…KIEA), 280-314 (NTHV…SLQS), 317-351 (DDKT…PINP), 355-390 (SSRT…QWKP), and 569-604 (DIHV…SYLP).

This sequence belongs to the CCM1 family. In terms of assembly, binds to mitochondrial small subunit 15S rRNA.

It localises to the mitochondrion. Its function is as follows. Regulates mitochondrial small subunit maturation by controlling 15S rRNA 5'-end processing. Localizes to the 5' precursor of the 15S rRNA in a position that is subsequently occupied by mS47 in the mature yeast mtSSU. Uses structure and sequence-specific RNA recognition, binding to a single-stranded region of the precursor and specifically recognizing bases -6 to -1. The exchange of Ccm1 for mS47 is coupled to the irreversible removal of precursor rRNA that is accompanied by conformational changes of the mitoribosomal proteins uS5m and mS26. These conformational changes signal completion of 5'-end rRNA processing through protection of the mature 5'-end of the 15S rRNA and stabilization of mS47. The removal of the 5' precursor together with the dissociation of Ccm1 may be catalyzed by the 5'-3' exoribonuclease Pet127. Involved in the specific removal of group I introns in mitochondrial encoded transcripts. In Schizosaccharomyces japonicus (strain yFS275 / FY16936) (Fission yeast), this protein is Mitochondrial 15S rRNA processing factor ppr3 (dmr1).